The primary structure comprises 148 residues: Large ribosomal subunit protein bL9 (148 aa).

The protein belongs to the bacterial ribosomal protein bL9 family.

Binds to the 23S rRNA. The protein is Large ribosomal subunit protein bL9 of Thermus thermophilus.